We begin with the raw amino-acid sequence, 576 residues long: Sulfite reductase [NADPH] hemoprotein beta-component (576 aa).

[4Fe-4S] cluster-binding residues include Cys435, Cys441, Cys480, and Cys484. Residue Cys484 participates in siroheme binding.

This sequence belongs to the nitrite and sulfite reductase 4Fe-4S domain family. In terms of assembly, alpha(8)-beta(8). The alpha component is a flavoprotein, the beta component is a hemoprotein. It depends on siroheme as a cofactor. [4Fe-4S] cluster is required as a cofactor.

The catalysed reaction is hydrogen sulfide + 3 NADP(+) + 3 H2O = sulfite + 3 NADPH + 4 H(+). Its pathway is sulfur metabolism; hydrogen sulfide biosynthesis; hydrogen sulfide from sulfite (NADPH route): step 1/1. Functionally, component of the sulfite reductase complex that catalyzes the 6-electron reduction of sulfite to sulfide. This is one of several activities required for the biosynthesis of L-cysteine from sulfate. The chain is Sulfite reductase [NADPH] hemoprotein beta-component from Photorhabdus laumondii subsp. laumondii (strain DSM 15139 / CIP 105565 / TT01) (Photorhabdus luminescens subsp. laumondii).